The primary structure comprises 156 residues: ATP synthase subunit b (156 aa).

Residues 7 to 27 (LIGQLIAFAIFVAFCMKFVWP) form a helical membrane-spanning segment.

This sequence belongs to the ATPase B chain family. F-type ATPases have 2 components, F(1) - the catalytic core - and F(0) - the membrane proton channel. F(1) has five subunits: alpha(3), beta(3), gamma(1), delta(1), epsilon(1). F(0) has three main subunits: a(1), b(2) and c(10-14). The alpha and beta chains form an alternating ring which encloses part of the gamma chain. F(1) is attached to F(0) by a central stalk formed by the gamma and epsilon chains, while a peripheral stalk is formed by the delta and b chains.

The protein resides in the cell inner membrane. Functionally, f(1)F(0) ATP synthase produces ATP from ADP in the presence of a proton or sodium gradient. F-type ATPases consist of two structural domains, F(1) containing the extramembraneous catalytic core and F(0) containing the membrane proton channel, linked together by a central stalk and a peripheral stalk. During catalysis, ATP synthesis in the catalytic domain of F(1) is coupled via a rotary mechanism of the central stalk subunits to proton translocation. In terms of biological role, component of the F(0) channel, it forms part of the peripheral stalk, linking F(1) to F(0). The chain is ATP synthase subunit b from Pasteurella multocida (strain Pm70).